The primary structure comprises 544 residues: Membrane protein insertase YidC (544 aa).

A helical membrane pass occupies residues 6–26 (NLLLIALLFVTFMLWQAWETD). The interval 112-132 (SGLTGKNGPDNPANGPRPLFT) is disordered. 4 helical membrane passes run 343-363 (KFLH…TFIV), 418-438 (LGGC…YYML), 456-476 (LSAQ…MFFI), and 497-517 (PVIF…YYIV).

This sequence belongs to the OXA1/ALB3/YidC family. Type 1 subfamily. In terms of assembly, interacts with the Sec translocase complex via SecD. Specifically interacts with transmembrane segments of nascent integral membrane proteins during membrane integration.

The protein localises to the cell inner membrane. In terms of biological role, required for the insertion and/or proper folding and/or complex formation of integral membrane proteins into the membrane. Involved in integration of membrane proteins that insert both dependently and independently of the Sec translocase complex, as well as at least some lipoproteins. Aids folding of multispanning membrane proteins. In Pectobacterium carotovorum subsp. carotovorum (strain PC1), this protein is Membrane protein insertase YidC.